A 410-amino-acid chain; its full sequence is Translation initiation factor 2 subunit gamma (410 aa).

Residues 9-202 (QAEVNIGMVG…AIEEFIPTPE (194 aa)) form the tr-type G domain. The segment at 18-25 (GHVDHGKT) is G1. The Mg(2+) site is built by aspartate 21, threonine 25, glycine 46, and threonine 48. 21–26 (DHGKTT) contacts GTP. A G2 region spans residues 46–50 (GITIK). Zn(2+)-binding residues include cysteine 61, cysteine 64, cysteine 73, and cysteine 76. A G3 region spans residues 90-93 (DAPG). GTP is bound by residues 145–148 (NKIE) and 180–182 (SAL). The G4 stretch occupies residues 145–148 (NKIE). Positions 180-182 (SAL) are G5.

It belongs to the TRAFAC class translation factor GTPase superfamily. Classic translation factor GTPase family. EIF2G subfamily. As to quaternary structure, heterotrimer composed of an alpha, a beta and a gamma chain. It depends on Mg(2+) as a cofactor.

It catalyses the reaction GTP + H2O = GDP + phosphate + H(+). Functionally, eIF-2 functions in the early steps of protein synthesis by forming a ternary complex with GTP and initiator tRNA. The protein is Translation initiation factor 2 subunit gamma of Thermococcus onnurineus (strain NA1).